Here is a 254-residue protein sequence, read N- to C-terminus: SLA class II histocompatibility antigen, DQ haplotype C alpha chain (254 aa).

An N-terminal signal peptide occupies residues 1-23 (MVPGRVLMWGALALTTVMSACGG). Residues 24 to 120 (EDIAADHVAS…KVPEVTVFSK (97 aa)) form an alpha-1 region. At 24 to 216 (EDIAADHVAS…IPAPMSELTE (193 aa)) the chain is on the extracellular side. N-linked (GlcNAc...) asparagine glycans are attached at residues Asn104 and Asn144. The region spanning 113 to 204 (PEVTVFSKSP…LDKPLLKHWE (92 aa)) is the Ig-like C1-type domain. Residues 121–203 (SPVILGQPNT…GLDKPLLKHW (83 aa)) are alpha-2. A disulfide bond links Cys133 and Cys188. A connecting peptide region spans residues 204-216 (EPEIPAPMSELTE). A helical membrane pass occupies residues 217 to 239 (TVVCALGLIVGLVGIVVGTVFII). Over 240 to 254 (QGLRSGGPSRHQGSL) the chain is Cytoplasmic.

Belongs to the MHC class II family.

The protein resides in the membrane. This chain is SLA class II histocompatibility antigen, DQ haplotype C alpha chain, found in Sus scrofa (Pig).